We begin with the raw amino-acid sequence, 331 residues long: Pantothenate kinase (331 aa).

109–116 is an ATP binding site; the sequence is GSVAVGKS.

The protein belongs to the prokaryotic pantothenate kinase family.

It localises to the cytoplasm. It catalyses the reaction (R)-pantothenate + ATP = (R)-4'-phosphopantothenate + ADP + H(+). Its pathway is cofactor biosynthesis; coenzyme A biosynthesis; CoA from (R)-pantothenate: step 1/5. In Rhizobium johnstonii (strain DSM 114642 / LMG 32736 / 3841) (Rhizobium leguminosarum bv. viciae), this protein is Pantothenate kinase.